The sequence spans 212 residues: Phosphatidylserine decarboxylase proenzyme (212 aa).

S182 acts as the Schiff-base intermediate with substrate; via pyruvic acid in catalysis. Residue S182 is modified to Pyruvic acid (Ser); by autocatalysis.

It belongs to the phosphatidylserine decarboxylase family. PSD-A subfamily. As to quaternary structure, heterodimer of a large membrane-associated beta subunit and a small pyruvoyl-containing alpha subunit. Pyruvate serves as cofactor. Post-translationally, is synthesized initially as an inactive proenzyme. Formation of the active enzyme involves a self-maturation process in which the active site pyruvoyl group is generated from an internal serine residue via an autocatalytic post-translational modification. Two non-identical subunits are generated from the proenzyme in this reaction, and the pyruvate is formed at the N-terminus of the alpha chain, which is derived from the carboxyl end of the proenzyme. The post-translation cleavage follows an unusual pathway, termed non-hydrolytic serinolysis, in which the side chain hydroxyl group of the serine supplies its oxygen atom to form the C-terminus of the beta chain, while the remainder of the serine residue undergoes an oxidative deamination to produce ammonia and the pyruvoyl prosthetic group on the alpha chain.

The protein resides in the cell membrane. It carries out the reaction a 1,2-diacyl-sn-glycero-3-phospho-L-serine + H(+) = a 1,2-diacyl-sn-glycero-3-phosphoethanolamine + CO2. It functions in the pathway phospholipid metabolism; phosphatidylethanolamine biosynthesis; phosphatidylethanolamine from CDP-diacylglycerol: step 2/2. Its function is as follows. Catalyzes the formation of phosphatidylethanolamine (PtdEtn) from phosphatidylserine (PtdSer). The chain is Phosphatidylserine decarboxylase proenzyme from Chlorobium luteolum (strain DSM 273 / BCRC 81028 / 2530) (Pelodictyon luteolum).